Here is a 204-residue protein sequence, read N- to C-terminus: Peptide deformylase (204 aa).

Residues cysteine 131 and histidine 174 each coordinate Fe cation. Residue glutamate 175 is part of the active site. Histidine 178 is a Fe cation binding site.

This sequence belongs to the polypeptide deformylase family. Fe(2+) serves as cofactor.

The catalysed reaction is N-terminal N-formyl-L-methionyl-[peptide] + H2O = N-terminal L-methionyl-[peptide] + formate. In terms of biological role, removes the formyl group from the N-terminal Met of newly synthesized proteins. Requires at least a dipeptide for an efficient rate of reaction. N-terminal L-methionine is a prerequisite for activity but the enzyme has broad specificity at other positions. This chain is Peptide deformylase, found in Streptococcus equi subsp. zooepidemicus (strain MGCS10565).